The following is a 388-amino-acid chain: Chaperone protein DnaJ (388 aa).

The 66-residue stretch at 5 to 70 folds into the J domain; sequence DYYEVLGVAR…QKRAAYDRFG (66 aa). The CR-type zinc-finger motif lies at 141-219; the sequence is GKTETIRLPT…CGGAGRVTRE (79 aa). Positions 154, 157, 171, 174, 193, 196, 207, and 210 each coordinate Zn(2+). CXXCXGXG motif repeat units follow at residues 154 to 161, 171 to 178, 193 to 200, and 207 to 214; these read CEVCAGSG, CPTCGGYG, CPNCHGRG, and CTACGGAG.

It belongs to the DnaJ family. In terms of assembly, homodimer. Zn(2+) is required as a cofactor.

The protein localises to the cytoplasm. Functionally, participates actively in the response to hyperosmotic and heat shock by preventing the aggregation of stress-denatured proteins and by disaggregating proteins, also in an autonomous, DnaK-independent fashion. Unfolded proteins bind initially to DnaJ; upon interaction with the DnaJ-bound protein, DnaK hydrolyzes its bound ATP, resulting in the formation of a stable complex. GrpE releases ADP from DnaK; ATP binding to DnaK triggers the release of the substrate protein, thus completing the reaction cycle. Several rounds of ATP-dependent interactions between DnaJ, DnaK and GrpE are required for fully efficient folding. Also involved, together with DnaK and GrpE, in the DNA replication of plasmids through activation of initiation proteins. This chain is Chaperone protein DnaJ, found in Methylobacterium nodulans (strain LMG 21967 / CNCM I-2342 / ORS 2060).